Reading from the N-terminus, the 123-residue chain is Large ribosomal subunit protein uL14 (123 aa).

Belongs to the universal ribosomal protein uL14 family. In terms of assembly, part of the 50S ribosomal subunit. Forms a cluster with proteins L3 and L19. In the 70S ribosome, L14 and L19 interact and together make contacts with the 16S rRNA in bridges B5 and B8.

Its function is as follows. Binds to 23S rRNA. Forms part of two intersubunit bridges in the 70S ribosome. The chain is Large ribosomal subunit protein uL14 from Chromohalobacter salexigens (strain ATCC BAA-138 / DSM 3043 / CIP 106854 / NCIMB 13768 / 1H11).